The following is a 398-amino-acid chain: Tryptophan synthase beta chain (398 aa).

At Lys89 the chain carries N6-(pyridoxal phosphate)lysine.

The protein belongs to the TrpB family. As to quaternary structure, tetramer of two alpha and two beta chains. It depends on pyridoxal 5'-phosphate as a cofactor.

The enzyme catalyses (1S,2R)-1-C-(indol-3-yl)glycerol 3-phosphate + L-serine = D-glyceraldehyde 3-phosphate + L-tryptophan + H2O. Its pathway is amino-acid biosynthesis; L-tryptophan biosynthesis; L-tryptophan from chorismate: step 5/5. Its function is as follows. The beta subunit is responsible for the synthesis of L-tryptophan from indole and L-serine. The protein is Tryptophan synthase beta chain of Methanopyrus kandleri (strain AV19 / DSM 6324 / JCM 9639 / NBRC 100938).